The sequence spans 214 residues: Putative pit accessory protein (214 aa).

Belongs to the UPF0111 family.

In terms of biological role, could be involved in orthophosphate transport. In Rhizobium meliloti (strain 1021) (Ensifer meliloti), this protein is Putative pit accessory protein.